A 355-amino-acid chain; its full sequence is MSLCTLAINLSAIKNNYFLLQDICKTSLVGAVVKADGYGLGAVQISKALIEENCRHFFVASSEEGVNVRKALGIDVNILVLNGVFEHDALELIEYNLIPILNNLKQIEIWQQFGNLKNLLLPCYLHFNTGINRLGLSSNEIEQLINNRDLLKGLNLQYIISHLAISEEIDNPYNLEQLNKFKAYLRYFPSIKASLANSGGIFLGQDYHFDLVRPGAALYGLNPLMQNPVTLKAPIIHLQNLTLDSHIGYNMTFTTKRDSVIATLPLGYADGYSRNFSNQGKVFINGRSVPIVGRVSMDLINIDVTDLPPSDIFLGQEVEIIGNHCTPDKIASIIGTIGYEVLTSLGNRYRRKYTR.

K34 functions as the Proton acceptor; specific for D-alanine in the catalytic mechanism. K34 is modified (N6-(pyridoxal phosphate)lysine). R133 lines the substrate pocket. The active-site Proton acceptor; specific for L-alanine is the Y249. M297 contacts substrate.

This sequence belongs to the alanine racemase family. The cofactor is pyridoxal 5'-phosphate.

The catalysed reaction is L-alanine = D-alanine. It participates in amino-acid biosynthesis; D-alanine biosynthesis; D-alanine from L-alanine: step 1/1. In terms of biological role, catalyzes the interconversion of L-alanine and D-alanine. May also act on other amino acids. The polypeptide is Alanine racemase (alr) (Rickettsia canadensis (strain McKiel)).